A 792-amino-acid polypeptide reads, in one-letter code: Xaa-Pro dipeptidyl-peptidase (792 aa).

Catalysis depends on charge relay system residues S363, D482, and H513.

It belongs to the peptidase S15 family. As to quaternary structure, homodimer.

The protein localises to the cytoplasm. The catalysed reaction is Hydrolyzes Xaa-Pro-|- bonds to release unblocked, N-terminal dipeptides from substrates including Ala-Pro-|-p-nitroanilide and (sequentially) Tyr-Pro-|-Phe-Pro-|-Gly-Pro-|-Ile.. Removes N-terminal dipeptides sequentially from polypeptides having unsubstituted N-termini provided that the penultimate residue is proline. The protein is Xaa-Pro dipeptidyl-peptidase of Lactobacillus delbrueckii subsp. bulgaricus (strain ATCC BAA-365 / Lb-18).